A 419-amino-acid polypeptide reads, in one-letter code: Hyaluronan synthase (419 aa).

5 helical membrane-spanning segments follow: residues 8–28 (LIVL…MYLF), 33–53 (VGIY…LSFL), 318–338 (IVAL…VAIG), 345–365 (AIQL…IVAL), and 376–396 (PASF…LQPL).

The protein belongs to the NodC/HAS family. Mg(2+) is required as a cofactor.

Its subcellular location is the cell membrane. It carries out the reaction [hyaluronan](n) + UDP-N-acetyl-alpha-D-glucosamine = N-acetyl-beta-D-glucosaminyl-(1-&gt;4)-[hyaluronan](n) + UDP + H(+). The enzyme catalyses N-acetyl-beta-D-glucosaminyl-(1-&gt;4)-[hyaluronan](n) + UDP-alpha-D-glucuronate = [hyaluronan](n+1) + UDP + H(+). It functions in the pathway glycan biosynthesis; hyaluronan biosynthesis. In terms of biological role, glycosaminoglycan synthesis. The hyaluronic acid capsule is involved in the pathogenicity of group A Streptococci; it may be the major virulence determinant. The protein is Hyaluronan synthase (hasA) of Streptococcus pyogenes serotype M1.